The sequence spans 382 residues: Sphingoid long-chain base transporter RSB1 (382 aa).

The Extracellular portion of the chain corresponds to 1-34 (MSNATNNTLGSLLPQLEAAANSNSLYGGMVPNLR). N-linked (GlcNAc...) asparagine glycosylation is found at asparagine 3 and asparagine 6. Residues 35–55 (FNITMIVIWGILLTIHVVQLL) traverse the membrane as a helical segment. The Cytoplasmic segment spans residues 56 to 57 (MR). The helical transmembrane segment at 58 to 78 (QYWFSIAFICTGILEVLGFIG) threads the bilayer. The Extracellular segment spans residues 79–90 (RTWSHSNVADMD). The helical transmembrane segment at 91 to 111 (AFLLNMICLTIAPVFTMGGIY) threads the bilayer. The Cytoplasmic segment spans residues 112–135 (YQLAKLIEVYGHRFSLLPSPMAYS). The chain crosses the membrane as a helical span at residues 136-156 (FIFICSDIVSLVVQAVGGGLC). The Extracellular segment spans residues 157 to 171 (GVAVTDGTSTTTGNH). Residues 172–192 (VFIAGLAIQVASMAIFLMLWF) traverse the membrane as a helical segment. Residues 193–241 (HFLFRIYISVRWEHINSRPISLSLLKISQTEVDYLYREKFHFLRLEPKR) lie on the Cytoplasmic side of the membrane. The helical transmembrane segment at 242–262 (WVFHYFNLAMTVAVLTIFTRC) threads the bilayer. Topologically, residues 263 to 281 (CYRLAELVVGWDGYLITHE) are extracellular. A helical membrane pass occupies residues 282–302 (WYFIILDALMMAIATVTLTIF). Residues 303–382 (HPGFAFKGRS…LFSSKKKAKL (80 aa)) lie on the Cytoplasmic side of the membrane.

This sequence belongs to the lipid-translocating exporter (LTE) (TC 9.A.26.1) family.

The protein resides in the cell membrane. Its function is as follows. Catalyzes the ATP-dependent translocation of sphingoid long-chain bases (LCBs) from the cytoplasmic site toward the extracytoplasmic side of the membrane (flip-flop). Involved in the establishment of the functional lipid asymmetry of the plasma membrane. Regulates intracellular levels of LCBs, sphingolipid precursors that are growth inhibitory at increased levels. The sequence is that of Sphingoid long-chain base transporter RSB1 (RSB1) from Saccharomyces cerevisiae (strain AWRI1631) (Baker's yeast).